The following is a 154-amino-acid chain: MFKEFKIFIMRGNVVDLAVGIVIGAAFGAIVNSLVKDVLMPPIGLLLGNVDFGNLFIVLKEGAIGGPYESLLVAQTAGAVTINYGVFINALINFLILAMAIFFFVVRPLNQLAARQKSKEAVIPAQTDKKDCPYCATQIPLKASKCPYCTSELM.

2 helical membrane-spanning segments follow: residues 14 to 34 and 86 to 106; these read VVDL…VNSL and VFIN…FFVV.

It belongs to the MscL family. Homopentamer.

Its subcellular location is the cell membrane. Channel that opens in response to stretch forces in the membrane lipid bilayer. May participate in the regulation of osmotic pressure changes within the cell. The chain is Large-conductance mechanosensitive channel from Dehalococcoides mccartyi (strain ATCC BAA-2100 / JCM 16839 / KCTC 5957 / BAV1).